Here is a 461-residue protein sequence, read N- to C-terminus: Phosphoglucosamine mutase (461 aa).

Ser113 serves as the catalytic Phosphoserine intermediate. Residues Ser113, Asp251, Asp253, and Asp255 each contribute to the Mg(2+) site. Ser113 is modified (phosphoserine).

It belongs to the phosphohexose mutase family. It depends on Mg(2+) as a cofactor. Post-translationally, activated by phosphorylation.

It catalyses the reaction alpha-D-glucosamine 1-phosphate = D-glucosamine 6-phosphate. Catalyzes the conversion of glucosamine-6-phosphate to glucosamine-1-phosphate. The polypeptide is Phosphoglucosamine mutase (Prochlorococcus marinus (strain SARG / CCMP1375 / SS120)).